Reading from the N-terminus, the 213-residue chain is Large ribosomal subunit protein uL1 (213 aa).

It belongs to the universal ribosomal protein uL1 family. In terms of assembly, part of the 50S ribosomal subunit.

Functionally, binds directly to 23S rRNA. Probably involved in E site tRNA release. Its function is as follows. Protein L1 is also a translational repressor protein, it controls the translation of its operon by binding to its mRNA. This is Large ribosomal subunit protein uL1 from Methanococcus maripaludis (strain C5 / ATCC BAA-1333).